Consider the following 186-residue polypeptide: ATP synthase subunit delta (186 aa).

The protein belongs to the ATPase delta chain family. As to quaternary structure, F-type ATPases have 2 components, F(1) - the catalytic core - and F(0) - the membrane proton channel. F(1) has five subunits: alpha(3), beta(3), gamma(1), delta(1), epsilon(1). CF(0) has four main subunits: a(1), b(1), b'(1) and c(10-14). The alpha and beta chains form an alternating ring which encloses part of the gamma chain. F(1) is attached to F(0) by a central stalk formed by the gamma and epsilon chains, while a peripheral stalk is formed by the delta, b and b' chains.

It is found in the cell inner membrane. In terms of biological role, f(1)F(0) ATP synthase produces ATP from ADP in the presence of a proton or sodium gradient. F-type ATPases consist of two structural domains, F(1) containing the extramembraneous catalytic core and F(0) containing the membrane proton channel, linked together by a central stalk and a peripheral stalk. During catalysis, ATP synthesis in the catalytic domain of F(1) is coupled via a rotary mechanism of the central stalk subunits to proton translocation. Its function is as follows. This protein is part of the stalk that links CF(0) to CF(1). It either transmits conformational changes from CF(0) to CF(1) or is implicated in proton conduction. The sequence is that of ATP synthase subunit delta from Bradyrhizobium sp. (strain ORS 278).